Here is a 217-residue protein sequence, read N- to C-terminus: Ribosomal RNA small subunit methyltransferase G (217 aa).

S-adenosyl-L-methionine-binding positions include Gly79, Phe84, 130-131 (AE), and Arg148.

This sequence belongs to the methyltransferase superfamily. RNA methyltransferase RsmG family.

Its subcellular location is the cytoplasm. It carries out the reaction guanosine(527) in 16S rRNA + S-adenosyl-L-methionine = N(7)-methylguanosine(527) in 16S rRNA + S-adenosyl-L-homocysteine. Its function is as follows. Specifically methylates the N7 position of guanine in position 527 of 16S rRNA. The chain is Ribosomal RNA small subunit methyltransferase G from Myxococcus xanthus (strain DK1622).